We begin with the raw amino-acid sequence, 114 residues long: MHELSIVESLIELCEENALNNKAYNVQEIYVKIGRLSGIEVDLFKRCFETFKENSNICKNAKLFIELAPLEILCLKCDQTSILEENVFKCPKCQSIEYKIIQGEDLHLMRLVMK.

Residue histidine 2 participates in Ni(2+) binding. Residues cysteine 74, cysteine 77, cysteine 90, and cysteine 93 each coordinate Zn(2+).

It belongs to the HypA/HybF family.

In terms of biological role, involved in the maturation of [NiFe] hydrogenases. Required for nickel insertion into the metal center of the hydrogenase. The sequence is that of Hydrogenase maturation factor HypA from Campylobacter jejuni subsp. jejuni serotype O:2 (strain ATCC 700819 / NCTC 11168).